Reading from the N-terminus, the 245-residue chain is tRNA (guanine-N(1)-)-methyltransferase (245 aa).

S-adenosyl-L-methionine is bound by residues Gly114 and 134–139 (IGDYIL).

It belongs to the RNA methyltransferase TrmD family. In terms of assembly, homodimer.

It is found in the cytoplasm. It carries out the reaction guanosine(37) in tRNA + S-adenosyl-L-methionine = N(1)-methylguanosine(37) in tRNA + S-adenosyl-L-homocysteine + H(+). Functionally, specifically methylates guanosine-37 in various tRNAs. This Listeria monocytogenes serotype 4b (strain CLIP80459) protein is tRNA (guanine-N(1)-)-methyltransferase.